The chain runs to 415 residues: Multidrug resistance protein MdtA (415 aa).

The first 21 residues, 1–21 (MKGSYKSRWVIVIVVVIAAIA), serve as a signal peptide directing secretion. Residues 31–47 (DSQSAAPGATKQAQQSP) are compositionally biased toward polar residues. Disordered regions lie at residues 31–56 (DSQSAAPGATKQAQQSPAGGRRGMRA) and 390–415 (VVETQSATTPEEKATSREYAKKGARS). The span at 399 to 415 (PEEKATSREYAKKGARS) shows a compositional bias: basic and acidic residues.

Belongs to the membrane fusion protein (MFP) (TC 8.A.1) family. Part of a tripartite efflux system composed of MdtA, MdtB and MdtC.

Its subcellular location is the cell inner membrane. In terms of biological role, the MdtABC tripartite complex confers resistance against novobiocin and deoxycholate. The protein is Multidrug resistance protein MdtA of Escherichia coli O6:H1 (strain CFT073 / ATCC 700928 / UPEC).